We begin with the raw amino-acid sequence, 155 residues long: MARMHTRRRGSSGSDRPTADEPPEWSDVDEDAIEERVVELAEQGHDPSQIGLKLRDEGVQGTPVPDVKLATGKKVTEILEAHDAEPELPEDFRNLLEKAVRLHEHVEANGQDHQNKRALQNTQSKIRRLADYYRGDKLDEEFAYSYETAREIIEE.

The segment covering 1–10 has biased composition (basic residues); it reads MARMHTRRRG. Positions 1–66 are disordered; the sequence is MARMHTRRRG…EGVQGTPVPD (66 aa). Residues 21-33 show a composition bias toward acidic residues; the sequence is EPPEWSDVDEDAI. Residues 34 to 45 are compositionally biased toward basic and acidic residues; the sequence is EERVVELAEQGH.

This sequence belongs to the universal ribosomal protein uS15 family. As to quaternary structure, part of the 30S ribosomal subunit.

This chain is Small ribosomal subunit protein uS15, found in Halobacterium salinarum (strain ATCC 700922 / JCM 11081 / NRC-1) (Halobacterium halobium).